Consider the following 404-residue polypeptide: Dihydrolipoyllysine-residue acetyltransferase component of pyruvate dehydrogenase complex (404 aa).

The 77-residue stretch at 2-78 (PIKILMPALS…PVNSLIAVLS (77 aa)) folds into the Lipoyl-binding domain. Position 43 is an N6-lipoyllysine (lysine 43). The 38-residue stretch at 128–165 (FASPLAKRLAKIRNIRLESVQGSGPHGRIVKQDILSYS) folds into the Peripheral subunit-binding (PSBD) domain. Histidine 377 is an active-site residue.

It belongs to the 2-oxoacid dehydrogenase family. Forms a 24-polypeptide structural core with octahedral symmetry. (R)-lipoate serves as cofactor.

It carries out the reaction N(6)-[(R)-dihydrolipoyl]-L-lysyl-[protein] + acetyl-CoA = N(6)-[(R)-S(8)-acetyldihydrolipoyl]-L-lysyl-[protein] + CoA. Functionally, the pyruvate dehydrogenase complex catalyzes the overall conversion of pyruvate to acetyl-CoA and CO(2). It contains multiple copies of three enzymatic components: pyruvate dehydrogenase (E1), dihydrolipoamide acetyltransferase (E2) and lipoamide dehydrogenase (E3). This is Dihydrolipoyllysine-residue acetyltransferase component of pyruvate dehydrogenase complex (pdhC) from Rickettsia typhi (strain ATCC VR-144 / Wilmington).